Here is a 192-residue protein sequence, read N- to C-terminus: uncharacterized protein (192 aa).

One can recognise a Nudix hydrolase domain in the interval 29 to 160 (HRQAAVLIPI…PLDIYRRGDS (132 aa)). Residues 67–89 (GAVDDTDTSVIAAALREAEEEVA) carry the Nudix box motif. Mg(2+) is bound by residues glutamate 83 and glutamate 87.

This sequence belongs to the Nudix hydrolase family. PCD1 subfamily. The cofactor is Mn(2+). Requires Mg(2+) as cofactor.

In terms of biological role, probably mediates the hydrolysis of some nucleoside diphosphate derivatives. This is an uncharacterized protein from Escherichia fergusonii (strain ATCC 35469 / DSM 13698 / CCUG 18766 / IAM 14443 / JCM 21226 / LMG 7866 / NBRC 102419 / NCTC 12128 / CDC 0568-73).